Reading from the N-terminus, the 290-residue chain is Undecaprenyl-diphosphatase (290 aa).

8 helical membrane-spanning segments follow: residues 1–21, 48–68, 101–121, 125–145, 161–181, 202–222, 231–251, and 266–286; these read MFLLELIKGIILGIVEGLTEF, SAFTFKVVIQLGSVFAAAWVF, IHVLVGMVPAGILGFLFDDLI, LFSVPTVLIGLFIGAIYMIIA, INYFQAFVIGISQAIAMWPGF, SDFTFIMSVPIMLAASGLSLL, AHIPFYILGFLAAFIVGLIAI, and FAIYRIVLVIFIAILYFGFGI.

Belongs to the UppP family.

It localises to the cell membrane. It catalyses the reaction di-trans,octa-cis-undecaprenyl diphosphate + H2O = di-trans,octa-cis-undecaprenyl phosphate + phosphate + H(+). Catalyzes the dephosphorylation of undecaprenyl diphosphate (UPP). Confers resistance to bacitracin. This Staphylococcus epidermidis (strain ATCC 35984 / DSM 28319 / BCRC 17069 / CCUG 31568 / BM 3577 / RP62A) protein is Undecaprenyl-diphosphatase.